We begin with the raw amino-acid sequence, 119 residues long: Phosphoribosyl-AMP cyclohydrolase (119 aa).

Asp77 contributes to the Mg(2+) binding site. Zn(2+) is bound at residue Cys78. Asp79 and Asp81 together coordinate Mg(2+). Zn(2+) is bound by residues Cys94 and Cys101.

It belongs to the PRA-CH family. Homodimer. The cofactor is Mg(2+). Zn(2+) is required as a cofactor.

Its subcellular location is the cytoplasm. It catalyses the reaction 1-(5-phospho-beta-D-ribosyl)-5'-AMP + H2O = 1-(5-phospho-beta-D-ribosyl)-5-[(5-phospho-beta-D-ribosylamino)methylideneamino]imidazole-4-carboxamide. The protein operates within amino-acid biosynthesis; L-histidine biosynthesis; L-histidine from 5-phospho-alpha-D-ribose 1-diphosphate: step 3/9. Its function is as follows. Catalyzes the hydrolysis of the adenine ring of phosphoribosyl-AMP. In Cereibacter sphaeroides (strain ATCC 17023 / DSM 158 / JCM 6121 / CCUG 31486 / LMG 2827 / NBRC 12203 / NCIMB 8253 / ATH 2.4.1.) (Rhodobacter sphaeroides), this protein is Phosphoribosyl-AMP cyclohydrolase.